The primary structure comprises 144 residues: L-fucose mutarotase (144 aa).

His22 (proton donor) is an active-site residue. Substrate is bound by residues Asp30, Arg109, and 131–133 (YGN).

The protein belongs to the RbsD / FucU family. FucU mutarotase subfamily. In terms of assembly, homodecamer.

The protein localises to the cytoplasm. It carries out the reaction alpha-L-fucose = beta-L-fucose. It functions in the pathway carbohydrate metabolism; L-fucose metabolism. Its function is as follows. Involved in the anomeric conversion of L-fucose. The polypeptide is L-fucose mutarotase (Haemophilus influenzae (strain 86-028NP)).